The chain runs to 453 residues: Cysteine--tRNA ligase (453 aa).

Cys-31 is a binding site for Zn(2+). The 'HIGH' region motif lies at 33–43 (PTVYDNPHIGN). The Zn(2+) site is built by Cys-213, His-238, and Glu-242. A 'KMSKS' region motif is present at residues 271-275 (KMAKS). Lys-274 is an ATP binding site.

Belongs to the class-I aminoacyl-tRNA synthetase family. As to quaternary structure, monomer. Requires Zn(2+) as cofactor.

The protein resides in the cytoplasm. The enzyme catalyses tRNA(Cys) + L-cysteine + ATP = L-cysteinyl-tRNA(Cys) + AMP + diphosphate. In Pelagibacter ubique (strain HTCC1062), this protein is Cysteine--tRNA ligase.